Consider the following 426-residue polypeptide: 3-phosphoshikimate 1-carboxyvinyltransferase (426 aa).

The 3-phosphoshikimate site is built by Lys-22, Ser-23, and Arg-27. Lys-22 lines the phosphoenolpyruvate pocket. Gly-96 and Arg-124 together coordinate phosphoenolpyruvate. Residues Ser-170, Ser-171, Gln-172, Ser-198, Asp-314, Asn-337, and Lys-341 each coordinate 3-phosphoshikimate. Gln-172 is a binding site for phosphoenolpyruvate. The Proton acceptor role is filled by Asp-314. Phosphoenolpyruvate-binding residues include Arg-345, Arg-387, and Lys-412.

Belongs to the EPSP synthase family. As to quaternary structure, monomer.

Its subcellular location is the cytoplasm. The catalysed reaction is 3-phosphoshikimate + phosphoenolpyruvate = 5-O-(1-carboxyvinyl)-3-phosphoshikimate + phosphate. It functions in the pathway metabolic intermediate biosynthesis; chorismate biosynthesis; chorismate from D-erythrose 4-phosphate and phosphoenolpyruvate: step 6/7. In terms of biological role, catalyzes the transfer of the enolpyruvyl moiety of phosphoenolpyruvate (PEP) to the 5-hydroxyl of shikimate-3-phosphate (S3P) to produce enolpyruvyl shikimate-3-phosphate and inorganic phosphate. This is 3-phosphoshikimate 1-carboxyvinyltransferase from Shewanella halifaxensis (strain HAW-EB4).